The sequence spans 481 residues: MAAQVVTVGESKDLRGLNLIAAHSHIRGLGVDADTLEPRVASQGLVGQEKARKAAAVVLEMIKQGKIAGRAVLIAGPPSTGKTALAMGMAQSLGTDVPFTTLAASEIYSLEMSKTEALTQAFRKSIGVRIKEESEIMEGEVVEIQIDRSVTGHAKQGKLTIKTTDMEAIYDMGSKMIDAMTKERVMAGDIISIDKSSGKITKLGRSYARSRDYDAMGVDTKFLQCPDGELQKRKEVVHTVTLHEIDVINSRTQGFLALFSGDTGEIRSEIRDQINTKVAEWKEEGKAEIVPGVLFIDEVHMLDIECFSYINRALESDLAPIVIMASNRGHSKIRGTDYKSPHGLPLDFLDRISIINTHSYTPDELRQILTIRAQEEEVDLTPDALALLTKIGAEAGLRYASNLITTSQLICAKRKAKQVGVEDVQRSFKLFYDPARSVKFVQESEKRLIGSDGVVDFRVNGGATGEPAATAAGGDSMDTSS.

76–83 (GPPSTGKT) contacts ATP.

This sequence belongs to the RuvB family. In terms of assembly, may form heterododecamers with hel-1/rvb1. Component of the SWR1 chromatin remodeling complex, the INO80 chromatin remodeling complex, and of the R2TP complex.

It localises to the nucleus. It catalyses the reaction ATP + H2O = ADP + phosphate + H(+). Functionally, DNA helicase which participates in several chromatin remodeling complexes, including the SWR1 and the INO80 complexes. The SWR1 complex mediates the ATP-dependent exchange of histone H2A for the H2A variant H2A.Z leading to transcriptional regulation of selected genes by chromatin remodeling. The INO80 complex remodels chromatin by shifting nucleosomes and is involved in DNA repair. Also involved in pre-rRNA processing. This chain is RuvB-like helicase 2 (hel-2), found in Neurospora crassa (strain ATCC 24698 / 74-OR23-1A / CBS 708.71 / DSM 1257 / FGSC 987).